We begin with the raw amino-acid sequence, 625 residues long: Chaperone protein HtpG (625 aa).

An a; substrate-binding region spans residues 1-341; sequence MGKRKFKAES…SEDLSLNISR (341 aa). The interval 342–551 is b; that stretch reads EMLQHDRQLK…DGEISLEMEK (210 aa). The c stretch occupies residues 552–625; that stretch reads IINAMPDDQQ…FTNDICKVMV (74 aa).

The protein belongs to the heat shock protein 90 family. As to quaternary structure, homodimer.

The protein localises to the cytoplasm. Molecular chaperone. Has ATPase activity. This chain is Chaperone protein HtpG, found in Oceanobacillus iheyensis (strain DSM 14371 / CIP 107618 / JCM 11309 / KCTC 3954 / HTE831).